Here is a 413-residue protein sequence, read N- to C-terminus: Phosphoribosylamine--glycine ligase (413 aa).

One can recognise an ATP-grasp domain in the interval 108–310 (KQLMDKYRIP…LMQLIIDLEN (203 aa)). Residue 134–190 (VETCDLPIVIKKDGLAAGKGVIIAFTREDALDGVKKIYQEEKGKVVFESYLEGEEFS) participates in ATP binding. E280 and N282 together coordinate Mg(2+).

The protein belongs to the GARS family. The cofactor is Mg(2+). Mn(2+) serves as cofactor.

It catalyses the reaction 5-phospho-beta-D-ribosylamine + glycine + ATP = N(1)-(5-phospho-beta-D-ribosyl)glycinamide + ADP + phosphate + H(+). Its pathway is purine metabolism; IMP biosynthesis via de novo pathway; N(1)-(5-phospho-D-ribosyl)glycinamide from 5-phospho-alpha-D-ribose 1-diphosphate: step 2/2. In Staphylococcus epidermidis (strain ATCC 12228 / FDA PCI 1200), this protein is Phosphoribosylamine--glycine ligase.